Consider the following 170-residue polypeptide: Photosystem I assembly protein Ycf3 (170 aa).

3 TPR repeats span residues 35-68, 72-105, and 120-153; these read AFCY…EEDP, SYII…NPRL, and GLKA…APNN.

Belongs to the Ycf3 family.

It localises to the plastid. It is found in the chloroplast thylakoid membrane. Essential for the assembly of the photosystem I (PSI) complex. May act as a chaperone-like factor to guide the assembly of the PSI subunits. The protein is Photosystem I assembly protein Ycf3 of Gracilaria tenuistipitata var. liui (Red alga).